Reading from the N-terminus, the 418-residue chain is D-amino acid dehydrogenase (418 aa).

3-17 (VLVLGAGVAGVSSAW) provides a ligand contact to FAD.

This sequence belongs to the DadA oxidoreductase family. Requires FAD as cofactor.

It catalyses the reaction a D-alpha-amino acid + A + H2O = a 2-oxocarboxylate + AH2 + NH4(+). It functions in the pathway amino-acid degradation; D-alanine degradation; NH(3) and pyruvate from D-alanine: step 1/1. Functionally, oxidative deamination of D-amino acids. The protein is D-amino acid dehydrogenase of Neisseria meningitidis serogroup C / serotype 2a (strain ATCC 700532 / DSM 15464 / FAM18).